We begin with the raw amino-acid sequence, 270 residues long: Secreted RxLR effector protein 149 (270 aa).

The N-terminal stretch at 1–21 (MRNGVVLFGLFFIGYSSCVLA) is a signal peptide. Residues 43-58 (RTLQADDPERILAEER) carry the RxLR-dEER motif.

It belongs to the RxLR effector family.

The protein localises to the secreted. The protein resides in the host nucleus. Its subcellular location is the host cytoplasm. Secreted effector that completely suppresses the host cell death induced by cell death-inducing proteins. In Plasmopara viticola (Downy mildew of grapevine), this protein is Secreted RxLR effector protein 149.